We begin with the raw amino-acid sequence, 303 residues long: Probable 5-dehydro-4-deoxyglucarate dehydratase (303 aa).

It belongs to the DapA family.

The enzyme catalyses 5-dehydro-4-deoxy-D-glucarate + H(+) = 2,5-dioxopentanoate + CO2 + H2O. It participates in carbohydrate acid metabolism; D-glucarate degradation; 2,5-dioxopentanoate from D-glucarate: step 2/2. The sequence is that of Probable 5-dehydro-4-deoxyglucarate dehydratase from Agrobacterium fabrum (strain C58 / ATCC 33970) (Agrobacterium tumefaciens (strain C58)).